Consider the following 544-residue polypeptide: MAKRIIYNENARRALEKGIDILAEAVAVTLGPKGRNVVLEKKFGAPQIINDGVTIAKEIELEDHIENTGVALIRQAASKTNDAAGDGTTTATVLAHAVVKEGLRNVAAGANAILLKRGIDKATNFLVEQIKSHARPVEDSKSIAQVGAISAGNDFEVGQMIADAMDKVGKEGVISLEEGKSMTTELEVTEGMRFDKGYISPYFATDTERMEAVFDEPFILITDKKIGLVQDLVPVLEQVARAGRPLVIIAEDIEKEALATLVVNRLRGVLNVAAVKAPGFGDRRKAMLEDIAVLTGGQLITEDAGLKLDTTKLDQLGKARRITITKDNTTIVAEGNEAAVKARVDQIRRQIEETESSYDKEKLQERLAKLSGGVAVVKVGAATETEMKDRKLRLEDAINATKAAVEEGIVPGGGTTLAHLAPQLEEWATANLSGEELTGAQIVARALTAPLKRIAENAGLNGAVISERVKELPFDEGYDASNNQFVNMFTAGIVDPAKVTRSALQNAASIAAMVLTTECIVVDKPEPKEKAPAGAGGGMGDFDY.

Residues 29–32, 86–90, G413, and D495 each bind ATP; these read TLGP and DGTTT.

This sequence belongs to the chaperonin (HSP60) family. Forms a cylinder of 14 subunits composed of two heptameric rings stacked back-to-back. Interacts with the co-chaperonin GroES.

The protein resides in the cytoplasm. The enzyme catalyses ATP + H2O + a folded polypeptide = ADP + phosphate + an unfolded polypeptide.. In terms of biological role, together with its co-chaperonin GroES, plays an essential role in assisting protein folding. The GroEL-GroES system forms a nano-cage that allows encapsulation of the non-native substrate proteins and provides a physical environment optimized to promote and accelerate protein folding. The polypeptide is Chaperonin GroEL 1 (Synechococcus sp. (strain ATCC 27144 / PCC 6301 / SAUG 1402/1) (Anacystis nidulans)).